The sequence spans 575 residues: Manganese transporter SMF1 (575 aa).

The Extracellular segment spans residues M1–R70. S24 carries the post-translational modification Phosphoserine. Glycyl lysine isopeptide (Lys-Gly) (interchain with G-Cter in ubiquitin) cross-links involve residues K33 and K34. A helical transmembrane segment spans residues D71–I91. Topologically, residues D92–F108 are cytoplasmic. The helical transmembrane segment at S109–I129 threads the bilayer. Residues K130–Y156 lie on the Extracellular side of the membrane. A helical membrane pass occupies residues F157–A177. Residues L178–N179 lie on the Cytoplasmic side of the membrane. A helical membrane pass occupies residues I180–I200. Over M201–E218 the chain is Extracellular. A helical membrane pass occupies residues C219–I239. Residues P240–T266 lie on the Cytoplasmic side of the membrane. Residues A267 to V287 traverse the membrane as a helical segment. At Q288–E344 the chain is on the extracellular side. Residues L345–G365 traverse the membrane as a helical segment. Residues S366–T396 are Cytoplasmic-facing. The helical transmembrane segment at I397 to G417 threads the bilayer. The Extracellular portion of the chain corresponds to Q418–N463. A helical transmembrane segment spans residues A464–T484. The Cytoplasmic portion of the chain corresponds to C485 to W543. Residues H498 to V517 are disordered. A helical transmembrane segment spans residues I544–I564. Residues V565–S575 lie on the Extracellular side of the membrane.

Belongs to the NRAMP family.

It is found in the cell membrane. It carries out the reaction Mn(2+)(in) = Mn(2+)(out). In terms of biological role, high-affinity manganese transporter involved in manganese uptake from the extracellular environment. Also contributes to cellular accumulation of other divalent metal ions such as cadmium, cobalt, copper, iron and nickel. The protein is Manganese transporter SMF1 (SMF1) of Saccharomyces cerevisiae (strain ATCC 204508 / S288c) (Baker's yeast).